The primary structure comprises 381 residues: Peptidoglycan transport system permease protein YejE (381 aa).

Transmembrane regions (helical) follow at residues 38–58 (YWSFWLFLILFFLSLIAEFIA), 183–203 (VLFGLTLTIASALVGVTAGAI), 230–250 (ILLIIAAILPPGFFVLLGIML), 292–312 (LLPNAMVATLTFLPFILSGSI), and 347–367 (WLGLTAFFTMSIMLSLLIFVG). An ABC transmembrane type-1 domain is found at 179-371 (FRISVLFGLT…LLIFVGEAVR (193 aa)).

It belongs to the binding-protein-dependent transport system permease family. As to quaternary structure, the complex is composed of one ATP-binding protein (YejF), two transmembrane proteins (YejB and YejE) and a solute-binding protein (YepA or YejA).

Its subcellular location is the cell inner membrane. In terms of biological role, part of the ABC transporter complex YejBEF-YepA involved in the uptake of muropeptides, the breakdown products of cell wall peptidoglycan. The import of muropeptides into the cell enables peptidoglycan recycling, which is vital for cell wall integrity in this bacterium. Is also probably part of the ABC transporter complex YejABEF, which is likely involved in broad-spectrum peptide import. Responsible for the translocation of the substrate across the membrane. This is Peptidoglycan transport system permease protein YejE from Agrobacterium fabrum (strain C58 / ATCC 33970) (Agrobacterium tumefaciens (strain C58)).